Reading from the N-terminus, the 92-residue chain is Small ribosomal subunit protein uS19 (92 aa).

A disordered region spans residues 73-92 (EFSPTRSFRGHAGAKNKGRK). Over residues 80–92 (FRGHAGAKNKGRK) the composition is skewed to basic residues.

This sequence belongs to the universal ribosomal protein uS19 family.

Protein S19 forms a complex with S13 that binds strongly to the 16S ribosomal RNA. In Christiangramia forsetii (strain DSM 17595 / CGMCC 1.15422 / KT0803) (Gramella forsetii), this protein is Small ribosomal subunit protein uS19.